The primary structure comprises 373 residues: Putative glutamate--cysteine ligase 2-1 (373 aa).

It belongs to the glutamate--cysteine ligase type 2 family. YbdK subfamily.

The catalysed reaction is L-cysteine + L-glutamate + ATP = gamma-L-glutamyl-L-cysteine + ADP + phosphate + H(+). Functionally, ATP-dependent carboxylate-amine ligase which exhibits weak glutamate--cysteine ligase activity. The polypeptide is Putative glutamate--cysteine ligase 2-1 (Legionella pneumophila (strain Lens)).